A 716-amino-acid polypeptide reads, in one-letter code: DNA ligase (716 aa).

NAD(+)-binding positions include 42–46, 91–92, and Glu-125; these read DAEYD and SL. Catalysis depends on Lys-127, which acts as the N6-AMP-lysine intermediate. NAD(+)-binding residues include Arg-148, Glu-184, Lys-300, and Lys-324. Zn(2+) contacts are provided by Cys-429, Cys-432, Cys-447, and Cys-453. A BRCT domain is found at 638–716; it reads TASSPIAGKI…EEAWLQLIEG (79 aa).

Belongs to the NAD-dependent DNA ligase family. LigA subfamily. It depends on Mg(2+) as a cofactor. Requires Mn(2+) as cofactor.

The enzyme catalyses NAD(+) + (deoxyribonucleotide)n-3'-hydroxyl + 5'-phospho-(deoxyribonucleotide)m = (deoxyribonucleotide)n+m + AMP + beta-nicotinamide D-nucleotide.. Functionally, DNA ligase that catalyzes the formation of phosphodiester linkages between 5'-phosphoryl and 3'-hydroxyl groups in double-stranded DNA using NAD as a coenzyme and as the energy source for the reaction. It is essential for DNA replication and repair of damaged DNA. The polypeptide is DNA ligase (Bartonella henselae (strain ATCC 49882 / DSM 28221 / CCUG 30454 / Houston 1) (Rochalimaea henselae)).